Consider the following 626-residue polypeptide: DNA primase (626 aa).

The CHC2-type zinc-finger motif lies at Cys39 to Cys63. Residues Glu264–Gly346 form the Toprim domain. Positions 270, 314, and 316 each coordinate Mg(2+).

Belongs to the DnaG primase family. Monomer. Interacts with DnaB. Zn(2+) serves as cofactor. Requires Mg(2+) as cofactor.

The catalysed reaction is ssDNA + n NTP = ssDNA/pppN(pN)n-1 hybrid + (n-1) diphosphate.. In terms of biological role, RNA polymerase that catalyzes the synthesis of short RNA molecules used as primers for DNA polymerase during DNA replication. The sequence is that of DNA primase from Listeria monocytogenes serovar 1/2a (strain ATCC BAA-679 / EGD-e).